Reading from the N-terminus, the 244-residue chain is rRNA adenine N-6-methyltransferase (244 aa).

Positions 11, 13, 38, 59, 84, and 101 each coordinate S-adenosyl-L-methionine.

The protein belongs to the class I-like SAM-binding methyltransferase superfamily. rRNA adenine N(6)-methyltransferase family.

The enzyme catalyses adenosine(2085) in 23S rRNA + 2 S-adenosyl-L-methionine = N(6)-dimethyladenosine(2085) in 23S rRNA + 2 S-adenosyl-L-homocysteine + 2 H(+). Functionally, this protein produces a dimethylation of the adenine residue at position 2085 in 23S rRNA, resulting in reduced affinity between ribosomes and macrolide-lincosamide-streptogramin B antibiotics. The polypeptide is rRNA adenine N-6-methyltransferase (ermM) (Staphylococcus epidermidis).